Consider the following 113-residue polypeptide: Large ribosomal subunit protein bL19 (113 aa).

This sequence belongs to the bacterial ribosomal protein bL19 family.

Its function is as follows. This protein is located at the 30S-50S ribosomal subunit interface and may play a role in the structure and function of the aminoacyl-tRNA binding site. This Corynebacterium efficiens (strain DSM 44549 / YS-314 / AJ 12310 / JCM 11189 / NBRC 100395) protein is Large ribosomal subunit protein bL19.